Reading from the N-terminus, the 611-residue chain is Threonine--tRNA ligase (611 aa).

The segment at 209 to 502 (DHRRLGKDLE…MTENYAGDFP (294 aa)) is catalytic. Zn(2+) contacts are provided by cysteine 302, histidine 353, and histidine 479.

It belongs to the class-II aminoacyl-tRNA synthetase family. As to quaternary structure, homodimer. The cofactor is Zn(2+).

It localises to the cytoplasm. It catalyses the reaction tRNA(Thr) + L-threonine + ATP = L-threonyl-tRNA(Thr) + AMP + diphosphate + H(+). Its function is as follows. Catalyzes the attachment of threonine to tRNA(Thr) in a two-step reaction: L-threonine is first activated by ATP to form Thr-AMP and then transferred to the acceptor end of tRNA(Thr). Also edits incorrectly charged L-seryl-tRNA(Thr). The chain is Threonine--tRNA ligase from Synechococcus sp. (strain CC9902).